A 231-amino-acid polypeptide reads, in one-letter code: Cytochrome c oxidase subunit 2 (231 aa).

The Mitochondrial intermembrane portion of the chain corresponds to Met1–Ser30. Residues Leu31 to Tyr52 form a helical membrane-spanning segment. The Mitochondrial matrix segment spans residues Phe53–Ile69. Residues Phe70 to Tyr89 form a helical membrane-spanning segment. The Mitochondrial intermembrane segment spans residues Gly90–Glu231. Cu cation contacts are provided by His164, Cys199, Glu201, Cys203, His207, and Met210. Glu201 serves as a coordination point for Mg(2+).

The protein belongs to the cytochrome c oxidase subunit 2 family. Component of the cytochrome c oxidase (complex IV, CIV), a multisubunit enzyme composed of a catalytic core of 3 subunits and several supernumerary subunits. The complex exists as a monomer or a dimer and forms supercomplexes (SCs) in the inner mitochondrial membrane with ubiquinol-cytochrome c oxidoreductase (cytochrome b-c1 complex, complex III, CIII). It depends on Cu cation as a cofactor.

It is found in the mitochondrion inner membrane. It carries out the reaction 4 Fe(II)-[cytochrome c] + O2 + 8 H(+)(in) = 4 Fe(III)-[cytochrome c] + 2 H2O + 4 H(+)(out). Functionally, component of the cytochrome c oxidase, the last enzyme in the mitochondrial electron transport chain which drives oxidative phosphorylation. The respiratory chain contains 3 multisubunit complexes succinate dehydrogenase (complex II, CII), ubiquinol-cytochrome c oxidoreductase (cytochrome b-c1 complex, complex III, CIII) and cytochrome c oxidase (complex IV, CIV), that cooperate to transfer electrons derived from NADH and succinate to molecular oxygen, creating an electrochemical gradient over the inner membrane that drives transmembrane transport and the ATP synthase. Cytochrome c oxidase is the component of the respiratory chain that catalyzes the reduction of oxygen to water. Electrons originating from reduced cytochrome c in the intermembrane space (IMS) are transferred via the dinuclear copper A center (CU(A)) of subunit 2 and heme A of subunit 1 to the active site in subunit 1, a binuclear center (BNC) formed by heme A3 and copper B (CU(B)). The BNC reduces molecular oxygen to 2 water molecules using 4 electrons from cytochrome c in the IMS and 4 protons from the mitochondrial matrix. This is Cytochrome c oxidase subunit 2 from Caenorhabditis elegans.